The sequence spans 269 residues: Protein MGF 110-1L (269 aa).

Position 1 (Met1) is a topological domain, cytoplasmic. The stretch at 1–145 (MLGLQIFTLL…YVRKRSLQTV (145 aa)) is one A repeat. A helical membrane pass occupies residues 2 to 18 (LGLQIFTLLSIPTLLYT). Residues 19–116 (YELELLDLTR…HEWHEAVIRK (98 aa)) lie on the Extracellular side of the membrane. N-linked (GlcNAc...) asparagine; by host glycosylation occurs at Asn75. The helical transmembrane segment at 117-137 (WQKLLTYGFYLVGCVLVANYV) threads the bilayer. Topologically, residues 138–144 (RKRSLQT) are cytoplasmic. Residues 145–165 (VMYLLVLLVIFFLLSQLMLYR) traverse the membrane as a helical segment. A B repeat occupies 147–269 (YLLVLLVIFF…DNLMKKQDMM (123 aa)). At 166-269 (ELEDKKHKIG…DNLMKKQDMM (104 aa)) the chain is on the extracellular side.

This sequence belongs to the asfivirus MGF 110 family.

The protein localises to the host membrane. In terms of biological role, plays a role in virus cell tropism, and may be required for efficient virus replication in macrophages. This chain is Protein MGF 110-1L, found in African swine fever virus (isolate Tick/South Africa/Pretoriuskop Pr4/1996) (ASFV).